Reading from the N-terminus, the 398-residue chain is MSERKLFTSESVSEGHPDKIADQISDAILDAILEQDPDAHVAAETAVYTGSVHVFGEISTTAYVDINRVVRNTIAEIGYDKAEYGFSAESVGVHPSLVEQSPDIAQGVNEALEVRGSLEQDPLDLIGAGDQGLMFGFAVDETPELMPLPISLAHQLVKKLTDLRKSGELTYLRPDAKSQVTVEYDENDQPIRVDAVVISTQHDPNVTNDQLHKDVIEKVINEVIPSHYLDDQTKFFINPTGRFVIGGPQGDSGLTGRKIIVDTYGGYSRHGGGAFSGKDATKVDRSASYAARYIAKNIVAADLAKKVEVQLAYAIGVAQPVSVRVDTFGTGVIAEADLEAAVRQIFDLRPAGIINMLDLKRPIYRQTAAYGHMGRTDIDLPWERVDKVQALKDFIASK.

His16 serves as a coordination point for ATP. Asp18 is a Mg(2+) binding site. Glu44 is a binding site for K(+). 2 residues coordinate L-methionine: Glu57 and Gln100. Positions 100 to 110 (QSPDIAQGVNE) are flexible loop. ATP contacts are provided by residues 175 to 177 (DAK), 242 to 243 (RF), Asp251, 257 to 258 (RK), Ala274, and Lys278. Residue Asp251 coordinates L-methionine. Lys282 contacts L-methionine.

Belongs to the AdoMet synthase family. Homotetramer; dimer of dimers. The cofactor is Mg(2+). K(+) serves as cofactor.

The protein resides in the cytoplasm. It catalyses the reaction L-methionine + ATP + H2O = S-adenosyl-L-methionine + phosphate + diphosphate. The protein operates within amino-acid biosynthesis; S-adenosyl-L-methionine biosynthesis; S-adenosyl-L-methionine from L-methionine: step 1/1. Catalyzes the formation of S-adenosylmethionine (AdoMet) from methionine and ATP. The overall synthetic reaction is composed of two sequential steps, AdoMet formation and the subsequent tripolyphosphate hydrolysis which occurs prior to release of AdoMet from the enzyme. The chain is S-adenosylmethionine synthase from Streptococcus agalactiae serotype Ia (strain ATCC 27591 / A909 / CDC SS700).